We begin with the raw amino-acid sequence, 222 residues long: Interleukin-12 subunit alpha (222 aa).

The first 25 residues, 1-25, serve as a signal peptide directing secretion; that stretch reads MCPPRGLLLVTILVLLSHLDHLTWA. Cystine bridges form between Cys40–Cys113, Cys67–Cys199, and Cys88–Cys126. 3 N-linked (GlcNAc...) asparagine glycosylation sites follow: Asn42, Asn96, and Asn110.

It belongs to the IL-6 superfamily. As to quaternary structure, heterodimer with IL12B; disulfide-linked. This heterodimer is known as interleukin IL-12. Heterodimer with EBI3/IL27B; not disulfide-linked. This heterodimer is known as interleukin IL-35. Interacts with NBR1; this interaction promotes IL-12 secretion.

Its subcellular location is the secreted. Its function is as follows. Heterodimerizes with IL12B to form the IL-12 cytokine or with EBI3/IL27B to form the IL-35 cytokine. IL-12 is primarily produced by professional antigen-presenting cells (APCs) such as B-cells and dendritic cells (DCs) as well as macrophages and granulocytes and regulates T-cell and natural killer-cell responses, induces the production of interferon-gamma (IFN-gamma), favors the differentiation of T-helper 1 (Th1) cells and is an important link between innate resistance and adaptive immunity. Mechanistically, exerts its biological effects through a receptor composed of IL12R1 and IL12R2 subunits. Binding to the receptor results in the rapid tyrosine phosphorylation of a number of cellular substrates including the JAK family kinases TYK2 and JAK2. In turn, recruited STAT4 gets phosphorylated and translocates to the nucleus where it regulates cytokine/growth factor responsive genes. As part of IL-35, plays essential roles in maintaining the immune homeostasis of the liver microenvironment and also functions as an immune-suppressive cytokine. Mediates biological events through unconventional receptors composed of IL12RB2 and gp130/IL6ST heterodimers or homodimers. Signaling requires the transcription factors STAT1 and STAT4, which form a unique heterodimer that binds to distinct DNA sites. The sequence is that of Interleukin-12 subunit alpha (IL12A) from Canis lupus familiaris (Dog).